Reading from the N-terminus, the 322-residue chain is MTNADEQNMGQQEGTDTATTAQDTNTQTVGTQSENTQNTQQASDAQTEQTPAELRDVLPQLTGEVDEDDVLDAQEEQAAGQSARKVDEDGEEYEEEFIDADDLMGLLGEMKEMLEAQSKEIRGLRREMRELRESQGGGFRGGDRGGDRGGFRPREDRGGFGGDRDRGGFRPREDRGERSFGGDRGGDRGGFRPREDRGGFGGDRDRGGFRPREDRGERSFGGDRGGDRGGQGGFRPREDRGGFGDRDRGGFRPREDRGERNFGGDRGGDRGGQGGFRPREDRNFGDREFRPRTDDAQGNQEGGFRPRARADRGWANRRTDEE.

Over residues 1-13 (MTNADEQNMGQQE) the composition is skewed to polar residues. 2 disordered regions span residues 1–94 (MTNA…EEYE) and 125–322 (RREM…TDEE). Over residues 14–31 (GTDTATTAQDTNTQTVGT) the composition is skewed to low complexity. Residues 32 to 50 (QSENTQNTQQASDAQTEQT) show a composition bias toward polar residues. Over residues 64 to 75 (EVDEDDVLDAQE) the composition is skewed to acidic residues. 4 stretches are compositionally biased toward basic and acidic residues: residues 141–227 (GGDR…RGGD), 235–269 (RPREDRGGFGDRDRGGFRPREDRGERNFGGDRGGD), 277–295 (RPREDRNFGDREFRPRTDD), and 308–322 (ARADRGWANRRTDEE).

This is an uncharacterized protein from Deinococcus radiodurans (strain ATCC 13939 / DSM 20539 / JCM 16871 / CCUG 27074 / LMG 4051 / NBRC 15346 / NCIMB 9279 / VKM B-1422 / R1).